Consider the following 253-residue polypeptide: Retinoic acid early-inducible protein 1-beta (253 aa).

A signal peptide spans 1–28 (MAKAAVTKRHHFMIQKLLILLSYGYTNG). An intrachain disulfide couples C37 to C56. N-linked (GlcNAc...) asparagine glycosylation is found at N38, N70, N83, N143, and N156. Residues C90 and C190 are joined by a disulfide bond. The tract at residues 198–230 (LKQSKEKPRSTSRSPSITQLTSTSPLPPPSHST) is disordered. Residues 211–221 (SPSITQLTSTS) show a composition bias toward low complexity. The GPI-anchor amidated serine moiety is linked to residue S229. A propeptide spans 230-253 (TSKKGFISVGLIFISLLFAFAFAM) (removed in mature form).

It belongs to the NKG2D ligand family. Glycosylated. In terms of tissue distribution, expressed predominantly in embryonic brain.

It localises to the cell membrane. Functionally, acts as a ligand for KLRK1. This Mus musculus (Mouse) protein is Retinoic acid early-inducible protein 1-beta (Raet1b).